The sequence spans 214 residues: RNA-free ribonuclease P (214 aa).

This sequence belongs to the HARP family.

The catalysed reaction is Endonucleolytic cleavage of RNA, removing 5'-extranucleotides from tRNA precursor.. Functionally, RNA-free RNase P that catalyzes the removal of the 5'-leader sequence from pre-tRNA to produce the mature 5'-terminus. The sequence is that of RNA-free ribonuclease P from Aeropyrum pernix (strain ATCC 700893 / DSM 11879 / JCM 9820 / NBRC 100138 / K1).